Here is a 388-residue protein sequence, read N- to C-terminus: Alanine racemase (388 aa).

The active-site Proton acceptor; specific for D-alanine is Lys44. An N6-(pyridoxal phosphate)lysine modification is found at Lys44. Arg142 contacts substrate. Catalysis depends on Tyr273, which acts as the Proton acceptor; specific for L-alanine. Residue Met321 participates in substrate binding.

Belongs to the alanine racemase family. The cofactor is pyridoxal 5'-phosphate.

The enzyme catalyses L-alanine = D-alanine. It participates in amino-acid biosynthesis; D-alanine biosynthesis; D-alanine from L-alanine: step 1/1. In terms of biological role, catalyzes the interconversion of L-alanine and D-alanine. May also act on other amino acids. The chain is Alanine racemase (alr) from Mycobacterium leprae (strain TN).